The following is a 131-amino-acid chain: MDFQQLADVAEKWCSSTPFELIAAEETERRMDFYADPGVSFYVLCPDNGCGDSFHVWSESEDCLPFLQLAQDYISSCGKKTLQEVLEKVFKSFRPLLGLPDADDDAFEEYSADVEEEEPEADHPQMGVSQQ.

Tyr-34 is modified (phosphotyrosine). Residues 107–120 show a composition bias toward acidic residues; it reads FEEYSADVEEEEPE. Residues 107 to 131 form a disordered region; it reads FEEYSADVEEEEPEADHPQMGVSQQ.

Belongs to the MTURN family. Phosphorylation at Tyr-34 is essential for its ability to promote megakaryocyte differentiation.

It is found in the cytoplasm. In terms of biological role, promotes megakaryocyte differentiation by enhancing ERK and JNK signaling as well as up-regulating RUNX1 and FLI1 expression. Represses NF-kappa-B transcriptional activity by inhibiting phosphorylation of RELA at 'Ser- 536'. May be involved in early neuronal development. This chain is Maturin (Mturn), found in Rattus norvegicus (Rat).